Reading from the N-terminus, the 570-residue chain is PTS system lactose-specific EIICB component (570 aa).

Residues 9–410 form the PTS EIIC type-3 domain; it reads IEKGKPFFEK…VVDIIIYYPF (402 aa). 9 helical membrane passes run 31 to 51, 65 to 85, 104 to 124, 133 to 153, 178 to 198, 223 to 243, 283 to 303, 340 to 360, and 382 to 402; these read GFIS…IAYV, AILM…VAGT, INFI…ASDP, AFMG…TVIV, FKDL…DLVI, GWIG…VGIH, MFIV…MFMW, VFFI…KLFV, and IIMG…LIVV. One can recognise a PTS EIIB type-3 domain in the interval 467–570; it reads QTNVLVLCAG…LDFVQQQFEN (104 aa). Catalysis depends on Cys474, which acts as the Phosphocysteine intermediate; for EIIB activity. Residue Cys474 is modified to Phosphocysteine; by EIIA.

The protein resides in the cell membrane. The enzyme catalyses lactose(out) + N(pros)-phospho-L-histidyl-[protein] = lactose 6-phosphate(in) + L-histidyl-[protein]. In terms of biological role, the phosphoenolpyruvate-dependent sugar phosphotransferase system (sugar PTS), a major carbohydrate active transport system, catalyzes the phosphorylation of incoming sugar substrates concomitantly with their translocation across the cell membrane. The enzyme II LacEF PTS system is involved in lactose transport, but can also use galactose, isopropyl beta-thio-galactopyranoside and thiomethyl beta-D-galactopyranoside (TMG) as substrates. This chain is PTS system lactose-specific EIICB component, found in Staphylococcus aureus.